Here is a 925-residue protein sequence, read N- to C-terminus: Protein translocase subunit SecA (925 aa).

Residues glutamine 87, 105–109, and aspartate 515 each bind ATP; that span reads GEGKT. Zn(2+)-binding residues include cysteine 909, cysteine 911, cysteine 920, and histidine 921.

Belongs to the SecA family. In terms of assembly, monomer and homodimer. Part of the essential Sec protein translocation apparatus which comprises SecA, SecYEG and auxiliary proteins SecDF-YajC and YidC. It depends on Zn(2+) as a cofactor.

The protein resides in the cell inner membrane. It is found in the cytoplasm. It carries out the reaction ATP + H2O + cellular proteinSide 1 = ADP + phosphate + cellular proteinSide 2.. Its function is as follows. Part of the Sec protein translocase complex. Interacts with the SecYEG preprotein conducting channel. Has a central role in coupling the hydrolysis of ATP to the transfer of proteins into and across the cell membrane, serving both as a receptor for the preprotein-SecB complex and as an ATP-driven molecular motor driving the stepwise translocation of polypeptide chains across the membrane. In Cupriavidus taiwanensis (strain DSM 17343 / BCRC 17206 / CCUG 44338 / CIP 107171 / LMG 19424 / R1) (Ralstonia taiwanensis (strain LMG 19424)), this protein is Protein translocase subunit SecA.